A 79-amino-acid polypeptide reads, in one-letter code: uncharacterized protein (79 aa).

This is an uncharacterized protein from Dryophytes versicolor (chameleon treefrog).